We begin with the raw amino-acid sequence, 133 residues long: Large ribosomal subunit protein bL20 (133 aa).

This sequence belongs to the bacterial ribosomal protein bL20 family.

In terms of biological role, binds directly to 23S ribosomal RNA and is necessary for the in vitro assembly process of the 50S ribosomal subunit. It is not involved in the protein synthesizing functions of that subunit. The sequence is that of Large ribosomal subunit protein bL20 from Bartonella bacilliformis (strain ATCC 35685 / KC583 / Herrer 020/F12,63).